A 456-amino-acid chain; its full sequence is Glycerol-3-phosphate dehydrogenase [NAD(+)] At3g07690, cytosolic (456 aa).

NAD(+)-binding positions include 41–46 (GAGAWG), Lys189, and Ala228. Lys189 lines the substrate pocket. Lys278 acts as the Proton acceptor in catalysis. NAD(+) is bound by residues Arg340 and Gln368. 340–341 (RN) provides a ligand contact to substrate.

The protein belongs to the NAD-dependent glycerol-3-phosphate dehydrogenase family. As to quaternary structure, homodimer.

It localises to the cytoplasm. The catalysed reaction is sn-glycerol 3-phosphate + NAD(+) = dihydroxyacetone phosphate + NADH + H(+). Its function is as follows. Required for glycerol-3-phosphate (G3P) accumulation during systemic acquired resistance (SAR) establishment. The chain is Glycerol-3-phosphate dehydrogenase [NAD(+)] At3g07690, cytosolic from Arabidopsis thaliana (Mouse-ear cress).